Consider the following 361-residue polypeptide: Histidinol-phosphate aminotransferase (361 aa).

Residue K223 is modified to N6-(pyridoxal phosphate)lysine.

Belongs to the class-II pyridoxal-phosphate-dependent aminotransferase family. Histidinol-phosphate aminotransferase subfamily. Homodimer. The cofactor is pyridoxal 5'-phosphate.

The catalysed reaction is L-histidinol phosphate + 2-oxoglutarate = 3-(imidazol-4-yl)-2-oxopropyl phosphate + L-glutamate. It functions in the pathway amino-acid biosynthesis; L-histidine biosynthesis; L-histidine from 5-phospho-alpha-D-ribose 1-diphosphate: step 7/9. This Deinococcus radiodurans (strain ATCC 13939 / DSM 20539 / JCM 16871 / CCUG 27074 / LMG 4051 / NBRC 15346 / NCIMB 9279 / VKM B-1422 / R1) protein is Histidinol-phosphate aminotransferase.